A 311-amino-acid polypeptide reads, in one-letter code: Formimidoylglutamase (311 aa).

The Mn(2+) site is built by His-130, Asp-155, His-157, Asp-159, Cys-242, and Asp-244.

It belongs to the arginase family. Requires Mn(2+) as cofactor.

It catalyses the reaction N-formimidoyl-L-glutamate + H2O = formamide + L-glutamate. The protein operates within amino-acid degradation; L-histidine degradation into L-glutamate; L-glutamate from N-formimidoyl-L-glutamate (hydrolase route): step 1/1. In terms of biological role, catalyzes the conversion of N-formimidoyl-L-glutamate to L-glutamate and formamide. This chain is Formimidoylglutamase, found in Staphylococcus epidermidis (strain ATCC 35984 / DSM 28319 / BCRC 17069 / CCUG 31568 / BM 3577 / RP62A).